The following is a 628-amino-acid chain: MTRRGGSDAAWYSAPDQRSAYPRYRGMRYSSCYVTMRDGVRIAIDLYLPAGLTSAARLPAILHQTRYYRSLQLRWPLRMLLGGKPLQHIAADKRRRRRFVASGYAWVDVDVRGSGASFGARVCEWSSDEIRDGAEIVDWIVRQPWCNGTVAALGNSYDGTSAELLLVNQHPAVRVIAPCFSLFDVYTDIAFPGGIHAAWFTDTWGRYNEALDRNALHEVVGWWAKLPVTGMQPVQEDRDRSLRDGAIAAHRGNYDVHQIAGSLTFRDDVSASDPYRGQPDARLEPIGTPIESGSINLISPHNYWRDVQASGAAIYSYSGWFDGGYAHAAIKRFLTVSTPGSHLILGPWNHTGGWRVDPLRGLSRPDFDHDGELLRFIDHHVKGADTGIGSEPPVHYFTMVENRWKSADTWPPPATTQSYYLSADRQLRPDAPDCDSGADEYVVDQTAGTGERSRWRSQVGIGGHVCYPDRKAQDAKLLTYTSAPLDHPLEVTGHVVVTLFITSTSSDGTFFVYLEDVDPRGRVAYITEGQLRAIHRRLSDGPPPYRQVVPYRTFASGDAWPLVPGEIARLTFDLLPTSYLFQPGHRIRIAIAGADASHFAILPGCAPTVRVYRSRMHASRIDLPVIQP.

Ser156 serves as the catalytic Acyl-ester intermediate. Active-site charge relay system residues include Asp322 and His350.

The protein belongs to the CocE/NonD hydrolase family.

In Mycobacterium bovis (strain ATCC BAA-935 / AF2122/97), this protein is Putative serine esterase Mb1866c.